The sequence spans 681 residues: Nucleolar GTP-binding protein 1 (681 aa).

Residues 170–341 (RTLILCGFPN…LRDRACDELL (172 aa)) enclose the OBG-type G domain. Residues 176-183 (GFPNVGKS), 222-226 (DTPGI), and 290-293 (NKVD) contribute to the GTP site.

It belongs to the TRAFAC class OBG-HflX-like GTPase superfamily. OBG GTPase family. NOG subfamily. In terms of tissue distribution, ubiquitously expressed.

It localises to the nucleus. Its subcellular location is the nucleolus. Its function is as follows. Involved in the biogenesis of the 60S ribosomal subunit. Has a role in regulating longevity, growth and brood size. May regulate fat storage via the insulin/IGF pathway. The protein is Nucleolar GTP-binding protein 1 of Caenorhabditis elegans.